Here is a 264-residue protein sequence, read N- to C-terminus: Expansin-B3 (264 aa).

Residues 1–25 form the signal peptide; sequence MQLFPVMLATLCIVLQLLIGSSALA. One can recognise an Expansin-like EG45 domain in the interval 54–162; it reads GGACGYGTLV…RRTACKYRGK (109 aa). 3 disulfide bridges follow: Cys57–Cys86, Cys89–Cys157, and Cys94–Cys100. One can recognise an Expansin-like CBD domain in the interval 175–256; sequence FWLSLLVEFE…NWAPKATYSS (82 aa).

Belongs to the expansin family. Expansin B subfamily.

It localises to the secreted. Its subcellular location is the cell wall. The protein resides in the membrane. May cause loosening and extension of plant cell walls by disrupting non-covalent bonding between cellulose microfibrils and matrix glucans. No enzymatic activity has been found. This Arabidopsis thaliana (Mouse-ear cress) protein is Expansin-B3 (EXPB3).